Here is a 156-residue protein sequence, read N- to C-terminus: Protein-export protein SecB (156 aa).

Belongs to the SecB family. In terms of assembly, homotetramer, a dimer of dimers. One homotetramer interacts with 1 SecA dimer.

It localises to the cytoplasm. Its function is as follows. One of the proteins required for the normal export of preproteins out of the cell cytoplasm. It is a molecular chaperone that binds to a subset of precursor proteins, maintaining them in a translocation-competent state. It also specifically binds to its receptor SecA. The sequence is that of Protein-export protein SecB from Pectobacterium carotovorum subsp. carotovorum (strain PC1).